We begin with the raw amino-acid sequence, 241 residues long: MTTANSASRPNINVDQAELDKFSALAARWWDPESEFKPLHAINPLRLEWIQELAGSLQGRRVLDVGCGGGILSEAMAQAGADVTGIDLAEKSLKIARLHGLESGVKVEYRAVPVEELATEQAGQYDIVTCMEMLEHVPDPNSVVRACAALVKPGGWVFFSTLNRNPKSFLFAIIGAEYVLRLLPRGTHSYEHFIKPSELAASARQAGLEPSGMRGMEYNPITQIYSLSGNTSVNYLMATRK.

The S-adenosyl-L-methionine site is built by Arg46, Gly66, Asp87, and Met131.

It belongs to the methyltransferase superfamily. UbiG/COQ3 family.

The catalysed reaction is a 3-demethylubiquinol + S-adenosyl-L-methionine = a ubiquinol + S-adenosyl-L-homocysteine + H(+). The enzyme catalyses a 3-(all-trans-polyprenyl)benzene-1,2-diol + S-adenosyl-L-methionine = a 2-methoxy-6-(all-trans-polyprenyl)phenol + S-adenosyl-L-homocysteine + H(+). The protein operates within cofactor biosynthesis; ubiquinone biosynthesis. O-methyltransferase that catalyzes the 2 O-methylation steps in the ubiquinone biosynthetic pathway. The polypeptide is Ubiquinone biosynthesis O-methyltransferase (Bordetella avium (strain 197N)).